Consider the following 94-residue polypeptide: Selenoprotein K (94 aa).

Residues 20 to 42 (LSLITDFFWGIAEFVVLFFKTLL) traverse the membrane as a helical segment. The segment at 47–94 (KKGRGYRNSSDSRYDDGRGPPGNPPRRMGRISHLHGPSPPPMAGGUGR) is disordered. Residue U92 is a non-standard amino acid, selenocysteine.

Belongs to the selenoprotein K family. As to quaternary structure, interacts with DERL1, DERL2, DERL3 and SELENOS. The SELENOK-SELENOS complex interacts with VCP. Interacts with ZDHHC6. Cleaved by CAPN2/m-calpain in resting macrophages but not in activated macrophages. Macrophage activation up-regulates expression of the calpain inhibitor CAST/calpastatin, resulting in inhibition of CAPN2 activity. In terms of processing, truncated SELENOK proteins produced by failed UGA/Sec decoding are ubiquitinated by the CRL2(KLHDC2) complex, which recognizes the diglycine (Gly-Gly) at the C-terminus of truncated SELENOK proteins.

The protein localises to the endoplasmic reticulum membrane. It is found in the cell membrane. In terms of biological role, required for Ca(2+) flux in immune cells and plays a role in T-cell proliferation and in T-cell and neutrophil migration. Involved in endoplasmic reticulum-associated degradation (ERAD) of soluble glycosylated proteins. Required for palmitoylation and cell surface expression of CD36 and involved in macrophage uptake of low-density lipoprotein and in foam cell formation. Together with ZDHHC6, required for palmitoylation of ITPR1 in immune cells, leading to regulate ITPR1 stability and function. Plays a role in protection of cells from ER stress-induced apoptosis. Protects cells from oxidative stress when overexpressed in cardiomyocytes. This is Selenoprotein K from Chinchilla lanigera (Long-tailed chinchilla).